Reading from the N-terminus, the 153-residue chain is Deoxyuridine 5'-triphosphate nucleotidohydrolase (153 aa).

Substrate-binding positions include 71–73 (RSG), N84, 88–90 (LID), and M98.

It belongs to the dUTPase family. Mg(2+) serves as cofactor.

It carries out the reaction dUTP + H2O = dUMP + diphosphate + H(+). It functions in the pathway pyrimidine metabolism; dUMP biosynthesis; dUMP from dCTP (dUTP route): step 2/2. Functionally, this enzyme is involved in nucleotide metabolism: it produces dUMP, the immediate precursor of thymidine nucleotides and it decreases the intracellular concentration of dUTP so that uracil cannot be incorporated into DNA. The protein is Deoxyuridine 5'-triphosphate nucleotidohydrolase of Hydrogenovibrio crunogenus (strain DSM 25203 / XCL-2) (Thiomicrospira crunogena).